A 122-amino-acid polypeptide reads, in one-letter code: Large ribosomal subunit protein bL12 (122 aa).

Belongs to the bacterial ribosomal protein bL12 family. Homodimer. Part of the ribosomal stalk of the 50S ribosomal subunit. Forms a multimeric L10(L12)X complex, where L10 forms an elongated spine to which 2 to 4 L12 dimers bind in a sequential fashion. Binds GTP-bound translation factors.

Functionally, forms part of the ribosomal stalk which helps the ribosome interact with GTP-bound translation factors. Is thus essential for accurate translation. This Stenotrophomonas maltophilia (strain K279a) protein is Large ribosomal subunit protein bL12.